Reading from the N-terminus, the 182-residue chain is P21 prophage-derived terminase small subunit (182 aa).

31 to 36 (SKGSKG) is a binding site for ATP.

The protein belongs to the terminase small subunit family. As to quaternary structure, heterooligomer of gp1 and gp2.

Its function is as follows. Involved in the initiation of the phage DNA packaging into the prohead. Processes replicating concatemeric DNA into pieces of unit length with cohesive ends. This is P21 prophage-derived terminase small subunit (nohA) from Escherichia coli O6:H1 (strain CFT073 / ATCC 700928 / UPEC).